Consider the following 491-residue polypeptide: MKPQCILISLLVNLAYAEEYLVRFKNPTAFQQFTSNSNRSWRQFIDNKIEKKFSIGSFRGVTMNLSKNLVNKLKKSPLVADIVPNFRFEAFEGDSVNSAESSYTFNATAKYSYEDVEEEQNITYQPDAPRHLARISRHYQLPFDVGDKDRYKSWFNYYYEHDYQGQDVNAYIMDTGIFADHPEFEDRVIQGIDLTKEGFGDQNGHGTHVAGLVGSKTYGAAKRVNLVEVKVLGKDGSGEASNVLSGLEFIVEHCTKVSRPQGKKCVANLSLGSFRSPIINMAVEGAIEEGIVFVAAAGNFNLDAYWASPASAENVITVGAFDDHIDTIAKFSNWGPCVNIFAPGVEIESLSHLNYNDTLILSGTSMSTPIVTGVAAILLSKGIEPEMIAQEIEYLSTRNVFHRRTLFFKPSTPNQILYNGVDKLDDPYDDETFPRLNIEAIAKELEEYNATLQTPMSENLQSGSKLWGWNNDVTLPLGEIRLKRRDFMKNL.

An N-terminal signal peptide occupies residues 1–17 (MKPQCILISLLVNLAYA). N-linked (GlcNAc...) asparagine glycans are attached at residues Asn38, Asn64, Asn106, and Asn121. A Peptidase S8 domain is found at 142–442 (PFDVGDKDRY…FPRLNIEAIA (301 aa)). Residues Asp174 and His205 each act as charge relay system in the active site. N-linked (GlcNAc...) asparagine glycosylation is found at Asn268 and Asn356. Catalysis depends on Ser365, which acts as the Charge relay system. N-linked (GlcNAc...) asparagine glycosylation occurs at Asn449.

It belongs to the peptidase S8 family. N-glycosylated.

The protein resides in the spore wall. Subtilisin-related protease involved in the formation of a protective dityrosine layer required for spore wall assembly. Identified in a screen for mutants with increased levels of rDNA transcription. The chain is Subtilase-type proteinase RRT12 (RRT12) from Saccharomyces cerevisiae (strain ATCC 204508 / S288c) (Baker's yeast).